The sequence spans 128 residues: Fluoride-specific ion channel FluC (128 aa).

4 consecutive transmembrane segments (helical) span residues 6 to 26 (LVALGGAIGSAARFTLSGLVL), 36 to 56 (LPTFTVNIIGCLVIGMLAGLA), 68 to 88 (VLLFTGLVGGFTTFSAFGLET), and 99 to 119 (IAAAYIVSSIVVGLVLMWLGF). The Na(+) site is built by Gly-76 and Thr-79.

It belongs to the fluoride channel Fluc/FEX (TC 1.A.43) family.

Its subcellular location is the cell inner membrane. The catalysed reaction is fluoride(in) = fluoride(out). Na(+) is not transported, but it plays an essential structural role and its presence is essential for fluoride channel function. Functionally, fluoride-specific ion channel. Important for reducing fluoride concentration in the cell, thus reducing its toxicity. This chain is Fluoride-specific ion channel FluC, found in Methylobacillus flagellatus (strain ATCC 51484 / DSM 6875 / VKM B-1610 / KT).